The primary structure comprises 418 residues: Gamma-glutamyl phosphate reductase (418 aa).

It belongs to the gamma-glutamyl phosphate reductase family.

The protein resides in the cytoplasm. It catalyses the reaction L-glutamate 5-semialdehyde + phosphate + NADP(+) = L-glutamyl 5-phosphate + NADPH + H(+). It participates in amino-acid biosynthesis; L-proline biosynthesis; L-glutamate 5-semialdehyde from L-glutamate: step 2/2. In terms of biological role, catalyzes the NADPH-dependent reduction of L-glutamate 5-phosphate into L-glutamate 5-semialdehyde and phosphate. The product spontaneously undergoes cyclization to form 1-pyrroline-5-carboxylate. The polypeptide is Gamma-glutamyl phosphate reductase (Geotalea daltonii (strain DSM 22248 / JCM 15807 / FRC-32) (Geobacter daltonii)).